The primary structure comprises 448 residues: Na(+)-translocating NADH-quinone reductase subunit A (448 aa).

It belongs to the NqrA family. As to quaternary structure, composed of six subunits; NqrA, NqrB, NqrC, NqrD, NqrE and NqrF.

It carries out the reaction a ubiquinone + n Na(+)(in) + NADH + H(+) = a ubiquinol + n Na(+)(out) + NAD(+). NQR complex catalyzes the reduction of ubiquinone-1 to ubiquinol by two successive reactions, coupled with the transport of Na(+) ions from the cytoplasm to the periplasm. NqrA to NqrE are probably involved in the second step, the conversion of ubisemiquinone to ubiquinol. The polypeptide is Na(+)-translocating NADH-quinone reductase subunit A (Alcanivorax borkumensis (strain ATCC 700651 / DSM 11573 / NCIMB 13689 / SK2)).